A 302-amino-acid chain; its full sequence is Zinc import ATP-binding protein ZnuC (302 aa).

The region spanning 13–228 (VSLANAGVRR…PEYLKLFGRR (216 aa)) is the ABC transporter domain. 45–52 (GPNGSGKS) contacts ATP.

Belongs to the ABC transporter superfamily. Zinc importer (TC 3.A.1.15.5) family. In terms of assembly, the complex is composed of two ATP-binding proteins (ZnuC), two transmembrane proteins (ZnuB) and a solute-binding protein (ZnuA).

It is found in the cell inner membrane. The catalysed reaction is Zn(2+)(out) + ATP(in) + H2O(in) = Zn(2+)(in) + ADP(in) + phosphate(in) + H(+)(in). Part of the ABC transporter complex ZnuABC involved in zinc import. Responsible for energy coupling to the transport system. The chain is Zinc import ATP-binding protein ZnuC from Rhizobium meliloti (strain 1021) (Ensifer meliloti).